Consider the following 218-residue polypeptide: Small ribosomal subunit protein uS5 (218 aa).

Residues 1–45 form a disordered region; the sequence is MPGRQRRDGGNGPAGQNSNGPEGRDNRRGGGDRRGGGDRRDNAAE. The span at 22–45 shows a compositional bias: basic and acidic residues; the sequence is EGRDNRRGGGDRRGGGDRRDNAAE. One can recognise an S5 DRBM domain in the interval 48-111; sequence QLERVVAINR…EEARKGFFRV (64 aa).

Belongs to the universal ribosomal protein uS5 family. In terms of assembly, part of the 30S ribosomal subunit. Contacts proteins S4 and S8.

In terms of biological role, with S4 and S12 plays an important role in translational accuracy. Its function is as follows. Located at the back of the 30S subunit body where it stabilizes the conformation of the head with respect to the body. This Nocardia farcinica (strain IFM 10152) protein is Small ribosomal subunit protein uS5.